We begin with the raw amino-acid sequence, 500 residues long: Protein nucleotidyltransferase YdiU (500 aa).

ATP-binding residues include G96, G98, R99, K119, D131, G132, R182, and R189. D258 serves as the catalytic Proton acceptor. Residues N259 and D268 each contribute to the Mg(2+) site. D268 contributes to the ATP binding site.

This sequence belongs to the SELO family. The cofactor is Mg(2+). Requires Mn(2+) as cofactor.

It catalyses the reaction L-seryl-[protein] + ATP = 3-O-(5'-adenylyl)-L-seryl-[protein] + diphosphate. The enzyme catalyses L-threonyl-[protein] + ATP = 3-O-(5'-adenylyl)-L-threonyl-[protein] + diphosphate. The catalysed reaction is L-tyrosyl-[protein] + ATP = O-(5'-adenylyl)-L-tyrosyl-[protein] + diphosphate. It carries out the reaction L-histidyl-[protein] + UTP = N(tele)-(5'-uridylyl)-L-histidyl-[protein] + diphosphate. It catalyses the reaction L-seryl-[protein] + UTP = O-(5'-uridylyl)-L-seryl-[protein] + diphosphate. The enzyme catalyses L-tyrosyl-[protein] + UTP = O-(5'-uridylyl)-L-tyrosyl-[protein] + diphosphate. In terms of biological role, nucleotidyltransferase involved in the post-translational modification of proteins. It can catalyze the addition of adenosine monophosphate (AMP) or uridine monophosphate (UMP) to a protein, resulting in modifications known as AMPylation and UMPylation. The polypeptide is Protein nucleotidyltransferase YdiU (Rhizobium leguminosarum bv. trifolii (strain WSM2304)).